A 246-amino-acid polypeptide reads, in one-letter code: 1-(5-phosphoribosyl)-5-[(5-phosphoribosylamino)methylideneamino] imidazole-4-carboxamide isomerase (246 aa).

Aspartate 8 acts as the Proton acceptor in catalysis. Aspartate 131 acts as the Proton donor in catalysis.

It belongs to the HisA/HisF family.

Its subcellular location is the cytoplasm. It catalyses the reaction 1-(5-phospho-beta-D-ribosyl)-5-[(5-phospho-beta-D-ribosylamino)methylideneamino]imidazole-4-carboxamide = 5-[(5-phospho-1-deoxy-D-ribulos-1-ylimino)methylamino]-1-(5-phospho-beta-D-ribosyl)imidazole-4-carboxamide. The protein operates within amino-acid biosynthesis; L-histidine biosynthesis; L-histidine from 5-phospho-alpha-D-ribose 1-diphosphate: step 4/9. The sequence is that of 1-(5-phosphoribosyl)-5-[(5-phosphoribosylamino)methylideneamino] imidazole-4-carboxamide isomerase from Lactococcus lactis subsp. cremoris (strain MG1363).